The chain runs to 413 residues: NADH-quinone oxidoreductase subunit D (413 aa).

This sequence belongs to the complex I 49 kDa subunit family. As to quaternary structure, NDH-1 is composed of 14 different subunits. Subunits NuoB, C, D, E, F, and G constitute the peripheral sector of the complex.

It is found in the cell inner membrane. The catalysed reaction is a quinone + NADH + 5 H(+)(in) = a quinol + NAD(+) + 4 H(+)(out). Its function is as follows. NDH-1 shuttles electrons from NADH, via FMN and iron-sulfur (Fe-S) centers, to quinones in the respiratory chain. The immediate electron acceptor for the enzyme in this species is believed to be ubiquinone. Couples the redox reaction to proton translocation (for every two electrons transferred, four hydrogen ions are translocated across the cytoplasmic membrane), and thus conserves the redox energy in a proton gradient. In Rhodobacter capsulatus (Rhodopseudomonas capsulata), this protein is NADH-quinone oxidoreductase subunit D.